Consider the following 302-residue polypeptide: Zinc transporter ZIP1 (302 aa).

The Extracellular segment spans residues 1 to 6; sequence MEYLLQ. A helical transmembrane segment spans residues 7–27; sequence VKIAALVGLLFLTLIFGFIPA. Topologically, residues 28 to 44 are cytoplasmic; it reads RVKWFRDTDGTETHRTV. Residues 45-65 form a helical membrane-spanning segment; sequence LSLISCFAGGVFLSACFLDII. Over 66-80 the chain is Extracellular; it reads PDYLSDINTELHARQ. The helical transmembrane segment at 81-101 threads the bilayer; it reads LETSFPLPEFIMAAGFFTVLI. Over 102–158 the chain is Cytoplasmic; it reads LERIVLNCKEMRATHEERTTLIPERKSGHGHGHGDGPDPESSGHHVHVDFQAHSPFR. The tract at residues 123-145 is disordered; that stretch reads IPERKSGHGHGHGDGPDPESSGH. The chain crosses the membrane as a helical span at residues 159–179; the sequence is SFMLFLSLSLHSIFEGLAIGL. Residues 180–185 lie on the Extracellular side of the membrane; the sequence is QTTDPK. The helical transmembrane segment at 186-206 threads the bilayer; that stretch reads VVEICIAILVHKSIIVFSLAV. Topologically, residues 207–216 are cytoplasmic; that stretch reads KLVQSAIPPL. A helical membrane pass occupies residues 217–237; it reads WVAAYIGVFALMSPVGIAIGI. Over 238–251 the chain is Extracellular; that stretch reads SVMEAQLAAGPLIQ. A helical transmembrane segment spans residues 252–272; it reads AILEGFAAGTFVYITFLEILP. The Cytoplasmic segment spans residues 273 to 281; the sequence is HELNSPGKQ. Residues 282–302 traverse the membrane as a helical segment; sequence LLKVLFLLLGFSIMAALSFLG.

Belongs to the ZIP transporter (TC 2.A.5) family. Highest levels in ovary, lower levels in intestine and gill, barely detected in kidney.

The protein resides in the cell membrane. It localises to the endoplasmic reticulum membrane. The enzyme catalyses Zn(2+)(in) = Zn(2+)(out). In terms of biological role, transporter for the divalent cation Zn(2+). Mediates the influx of Zn(2+) into cells from extracellular space. This chain is Zinc transporter ZIP1 (slc39a1), found in Takifugu rubripes (Japanese pufferfish).